Consider the following 51-residue polypeptide: Large ribosomal subunit protein eL39 (51 aa).

The protein belongs to the eukaryotic ribosomal protein eL39 family.

This is Large ribosomal subunit protein eL39 from Pyrobaculum islandicum (strain DSM 4184 / JCM 9189 / GEO3).